Consider the following 393-residue polypeptide: Putative competence-damage inducible protein (393 aa).

The protein belongs to the CinA family.

The polypeptide is Putative competence-damage inducible protein (Streptococcus suis (strain 05ZYH33)).